Here is a 334-residue protein sequence, read N- to C-terminus: Nucleoid-associated protein plu2870 (334 aa).

It belongs to the YejK family.

It localises to the cytoplasm. The protein resides in the nucleoid. This is Nucleoid-associated protein plu2870 from Photorhabdus laumondii subsp. laumondii (strain DSM 15139 / CIP 105565 / TT01) (Photorhabdus luminescens subsp. laumondii).